Here is a 271-residue protein sequence, read N- to C-terminus: Mitochondrial distribution and morphology protein 12 (271 aa).

The region spanning 1–267 (MSFDINWSTL…WPSWINLDFN (267 aa)) is the SMP-LTD domain. Residue lysine 49 forms a Glycyl lysine isopeptide (Lys-Gly) (interchain with G-Cter in ubiquitin) linkage.

It belongs to the MDM12 family. In terms of assembly, component of the ER-mitochondria encounter structure (ERMES) or MDM complex, composed of MMM1, MDM10, MDM12 and MDM34. An MMM1 homodimer associates with one molecule of MDM12 on each side in a pairwise head-to-tail manner, and the SMP-LTD domains of MMM1 and MDM12 generate a continuous hydrophobic tunnel for phospholipid trafficking. Interacts with PUF3.

The protein resides in the mitochondrion outer membrane. It is found in the endoplasmic reticulum membrane. Functionally, component of the ERMES/MDM complex, which serves as a molecular tether to connect the endoplasmic reticulum (ER) and mitochondria. Components of this complex are involved in the control of mitochondrial shape and protein biogenesis, and function in nonvesicular lipid trafficking between the ER and mitochondria. MDM12 is required for the interaction of the ER-resident membrane protein MMM1 and the outer mitochondrial membrane-resident beta-barrel protein MDM10. The MDM12-MMM1 subcomplex functions in the major beta-barrel assembly pathway that is responsible for biogenesis of all mitochondrial outer membrane beta-barrel proteins, and acts in a late step after the SAM complex. The MDM10-MDM12-MMM1 subcomplex further acts in the TOM40-specific pathway after the action of the MDM12-MMM1 complex. Essential for establishing and maintaining the structure of mitochondria and maintenance of mtDNA nucleoids. In Saccharomyces cerevisiae (strain AWRI1631) (Baker's yeast), this protein is Mitochondrial distribution and morphology protein 12.